A 164-amino-acid chain; its full sequence is PTS system sorbose-specific EIIB component (164 aa).

Residues 1-164 (MIITLARVDD…AKIDEVFGKE (164 aa)) form the PTS EIIB type-4 domain. H14 functions as the Pros-phosphohistidine intermediate in the catalytic mechanism. H14 carries the post-translational modification Phosphohistidine; by EIIA.

The protein resides in the cytoplasm. The enzyme catalyses keto-L-sorbose(out) + N(pros)-phospho-L-histidyl-[protein] = L-sorbose 1-phosphate(in) + L-histidyl-[protein]. The phosphoenolpyruvate-dependent sugar phosphotransferase system (PTS), a major carbohydrate active transport system, catalyzes the phosphorylation of incoming sugar substrates concomitant with their translocation across the cell membrane. The enzyme II SorABCD PTS system is involved in L-sorbose transport. The protein is PTS system sorbose-specific EIIB component of Lacticaseibacillus casei (Lactobacillus casei).